A 293-amino-acid polypeptide reads, in one-letter code: Protease HtpX (293 aa).

Helical transmembrane passes span 2-22 and 38-58; these read FRILLFLATNIAVVLVASVTL and LTSLLIFCAVFGMSGAMISLF. Position 145 (His145) interacts with Zn(2+). Residue Glu146 is part of the active site. His149 provides a ligand contact to Zn(2+). The next 2 membrane-spanning stretches (helical) occupy residues 156–176 and 193–213; these read VTLALIQGVINTFVMFFARII and IGFFITTIFAEIVLGILASII. Residue Glu222 coordinates Zn(2+).

Belongs to the peptidase M48B family. Zn(2+) is required as a cofactor.

Its subcellular location is the cell inner membrane. The sequence is that of Protease HtpX from Hahella chejuensis (strain KCTC 2396).